A 394-amino-acid polypeptide reads, in one-letter code: Serine palmitoyltransferase (394 aa).

Pyridoxal 5'-phosphate-binding positions include 111–112, Ser-183, His-211, and Thr-239; that span reads GF. Lys-242 is subject to N6-(pyridoxal phosphate)lysine.

Belongs to the class-II pyridoxal-phosphate-dependent aminotransferase family. It depends on pyridoxal 5'-phosphate as a cofactor.

It carries out the reaction L-serine + hexadecanoyl-CoA + H(+) = 3-oxosphinganine + CO2 + CoA. It participates in lipid metabolism; sphingolipid metabolism. Functionally, involved in de novo bacterial ceramide synthesis. Catalyzes the condensation of L-serine with palmitoyl-CoA (hexadecanoyl-CoA) to produce 3-oxosphinganine. Also capable of using alanine as substrate leading to the formation of 1-deoxysphinganine (1-deoxySa). Contributes to the levels of endogenous sphingolipids in its host. In Bacteroides ovatus (strain ATCC 8483 / DSM 1896 / JCM 5824 / BCRC 10623 / CCUG 4943 / NCTC 11153), this protein is Serine palmitoyltransferase.